The chain runs to 574 residues: Myo-inositol transporter FST1 (574 aa).

The Cytoplasmic segment spans residues 1 to 76; it reads MGKSRQNSTT…VQFANPKHFT (76 aa). A helical transmembrane segment spans residues 77–97; the sequence is WLLVAFASMGGLLSGLDQSLI. Over 98–115 the chain is Extracellular; that stretch reads SGANLFLPDDLGLTEHEN. Residues 116–136 form a helical membrane-spanning segment; sequence SLVNSGMPLGAVGGALLLSPA. At 137-143 the chain is on the cytoplasmic side; the sequence is NEYFGRK. Residues 144–164 traverse the membrane as a helical segment; the sequence is GAIIISIILYTIGAALEAGSI. The Extracellular portion of the chain corresponds to 165–173; the sequence is NFGMIVSSR. Residues 174-194 traverse the membrane as a helical segment; the sequence is VILGLGVGLEGGTVPVYVAET. Residues 195-205 are Cytoplasmic-facing; it reads VERRIRGNLVS. The helical transmembrane segment at 206–226 threads the bilayer; sequence LYQFNIALGEVLGYAVGAIFL. The Extracellular segment spans residues 227-233; it reads NVPGNWR. A helical transmembrane segment spans residues 234–254; the sequence is YILGSSLLFSTIMFFGMLFLP. Topologically, residues 255–330 are cytoplasmic; sequence ESPRFLIHQK…RARRALVYAN (76 aa). Residues 331–351 traverse the membrane as a helical segment; that stretch reads IMILLGQLTGVNAIMYYMSVL. The Extracellular portion of the chain corresponds to 352 to 363; the sequence is MNQIGFDKKESN. A helical membrane pass occupies residues 364 to 384; sequence YMSLVGGGSLLLGTIPAIFLM. The Cytoplasmic portion of the chain corresponds to 385–390; it reads ERFGRR. A helical membrane pass occupies residues 391 to 411; the sequence is FWAITMLPGFFIGLVLIGVSY. Over 412 to 426 the chain is Extracellular; that stretch reads QFDVETQLQTVEGLY. A helical membrane pass occupies residues 427–447; sequence LSGLIIYMGFFGSYACLTWVV. At 448–465 the chain is on the cytoplasmic side; the sequence is PSEVYPTYLRSYGMTTSD. The chain crosses the membrane as a helical span at residues 466–486; it reads ALLFLASFIVTYNFTAMQNAM. At 487-490 the chain is on the extracellular side; it reads GKTG. The chain crosses the membrane as a helical span at residues 491-511; sequence LALGFYGGIAFIGEIYQIFFM. The Cytoplasmic portion of the chain corresponds to 512–574; it reads PETKNKTLEE…PKDQVQVSHA (63 aa).

This sequence belongs to the major facilitator superfamily. Sugar transporter (TC 2.A.1.1) family.

It is found in the cell membrane. The enzyme catalyses myo-inositol(out) + H(+)(out) = myo-inositol(in) + H(+)(in). Transporter for myo-inositol. Also appears to transport the polyketide mycotoxin fumonisin B1 (FB1). Does not appear to transport hexose sugars. The polypeptide is Myo-inositol transporter FST1 (Gibberella moniliformis (strain M3125 / FGSC 7600) (Maize ear and stalk rot fungus)).